A 157-amino-acid chain; its full sequence is Endoribonuclease YbeY (157 aa).

Zn(2+) is bound by residues H114, H118, and H124.

This sequence belongs to the endoribonuclease YbeY family. Requires Zn(2+) as cofactor.

The protein localises to the cytoplasm. In terms of biological role, single strand-specific metallo-endoribonuclease involved in late-stage 70S ribosome quality control and in maturation of the 3' terminus of the 16S rRNA. The polypeptide is Endoribonuclease YbeY (Caulobacter vibrioides (strain ATCC 19089 / CIP 103742 / CB 15) (Caulobacter crescentus)).